Reading from the N-terminus, the 417-residue chain is D-amino acid dehydrogenase (417 aa).

Residue I3–Y17 coordinates FAD.

Belongs to the DadA oxidoreductase family. It depends on FAD as a cofactor.

It catalyses the reaction a D-alpha-amino acid + A + H2O = a 2-oxocarboxylate + AH2 + NH4(+). It participates in amino-acid degradation; D-alanine degradation; NH(3) and pyruvate from D-alanine: step 1/1. In terms of biological role, oxidative deamination of D-amino acids. The chain is D-amino acid dehydrogenase from Azorhizobium caulinodans (strain ATCC 43989 / DSM 5975 / JCM 20966 / LMG 6465 / NBRC 14845 / NCIMB 13405 / ORS 571).